The sequence spans 467 residues: Argininosuccinate lyase (467 aa).

This sequence belongs to the lyase 1 family. Argininosuccinate lyase subfamily.

The protein localises to the cytoplasm. It catalyses the reaction 2-(N(omega)-L-arginino)succinate = fumarate + L-arginine. The protein operates within amino-acid biosynthesis; L-arginine biosynthesis; L-arginine from L-ornithine and carbamoyl phosphate: step 3/3. This is Argininosuccinate lyase from Rhizobium johnstonii (strain DSM 114642 / LMG 32736 / 3841) (Rhizobium leguminosarum bv. viciae).